A 222-amino-acid chain; its full sequence is WAP four-disulfide core domain protein 1 (222 aa).

The N-terminal stretch at 1–32 is a signal peptide; that stretch reads MDSRMLSDQRFCRRIFAAALCVLVLLADSGCA. Positions 61 to 110 constitute a WAP domain; the sequence is HYQKNDRCPPPPQTLPDRACEVPSCRSDSECERHKRCCYNGCIYACLESV. 4 disulfides stabilise this stretch: C68-C98, C80-C102, C85-C97, and C91-C106.

It is found in the secreted. Its function is as follows. Has growth inhibitory activity. This chain is WAP four-disulfide core domain protein 1 (WFDC1), found in Gallus gallus (Chicken).